The chain runs to 166 residues: Large ribosomal subunit protein uL10 (166 aa).

The protein belongs to the universal ribosomal protein uL10 family. Part of the ribosomal stalk of the 50S ribosomal subunit. The N-terminus interacts with L11 and the large rRNA to form the base of the stalk. The C-terminus forms an elongated spine to which L12 dimers bind in a sequential fashion forming a multimeric L10(L12)X complex.

In terms of biological role, forms part of the ribosomal stalk, playing a central role in the interaction of the ribosome with GTP-bound translation factors. The protein is Large ribosomal subunit protein uL10 of Aromatoleum aromaticum (strain DSM 19018 / LMG 30748 / EbN1) (Azoarcus sp. (strain EbN1)).